A 301-amino-acid polypeptide reads, in one-letter code: Probable aspartoacylase (301 aa).

2 residues coordinate Zn(2+): H13 and E16. Residues R54 and 61–62 contribute to the substrate site; that span reads NR. H105 serves as a coordination point for Zn(2+). The substrate site is built by E163 and Y273.

This sequence belongs to the AspA/AstE family. Aspartoacylase subfamily. Zn(2+) serves as cofactor.

It carries out the reaction an N-acyl-L-aspartate + H2O = a carboxylate + L-aspartate. This chain is Probable aspartoacylase, found in Prochlorococcus marinus (strain MIT 9312).